The primary structure comprises 512 residues: Probable pectinesterase/pectinesterase inhibitor 54 (512 aa).

An N-terminal signal peptide occupies residues 1 to 24; it reads MGVIDMVLFWVLLVNALLIVDASS. The segment at 29 to 193 is pectinesterase inhibitor 54; that stretch reads FAYQNEMQRH…SRLVSNSLTL (165 aa). 2 N-linked (GlcNAc...) asparagine glycosylation sites follow: Asn-71 and Asn-131. The pectinesterase 54 stretch occupies residues 229–496; it reads HVVVAKDGSG…FSVVKRRNGE (268 aa). Gln-302 contacts substrate. Asp-325 functions as the Proton donor; for pectinesterase activity in the catalytic mechanism. The cysteines at positions 339 and 359 are disulfide-linked. The active-site Nucleophile; for pectinesterase activity is Asp-346. Substrate contacts are provided by Arg-415 and Trp-417.

This sequence in the N-terminal section; belongs to the PMEI family. It in the C-terminal section; belongs to the pectinesterase family. In terms of tissue distribution, expressed in siliques.

It is found in the secreted. Its subcellular location is the cell wall. The catalysed reaction is [(1-&gt;4)-alpha-D-galacturonosyl methyl ester](n) + n H2O = [(1-&gt;4)-alpha-D-galacturonosyl](n) + n methanol + n H(+). It functions in the pathway glycan metabolism; pectin degradation; 2-dehydro-3-deoxy-D-gluconate from pectin: step 1/5. In terms of biological role, acts in the modification of cell walls via demethylesterification of cell wall pectin. The chain is Probable pectinesterase/pectinesterase inhibitor 54 (PME54) from Arabidopsis thaliana (Mouse-ear cress).